The chain runs to 393 residues: Putative N(4)-(beta-N-acetylglucosaminyl)-L-asparaginase GM21137 (393 aa).

Residues Met-1–Ala-23 form the signal peptide. 2 cysteine pairs are disulfide-bonded: Cys-97-Cys-102 and Cys-196-Cys-212. The active-site Nucleophile is Thr-243. Substrate-binding positions include Arg-271–Asp-274 and Thr-294–Gly-297. Cys-354 and Cys-381 form a disulfide bridge.

It belongs to the Ntn-hydrolase family. In terms of assembly, heterotetramer of two alpha and two beta chains arranged as a dimer of alpha/beta heterodimers. Post-translationally, cleaved into an alpha and beta chain by autocatalysis; this activates the enzyme. The N-terminal residue of the beta subunit is responsible for the nucleophile hydrolase activity.

The enzyme catalyses N(4)-(beta-N-acetyl-D-glucosaminyl)-L-asparagine + H2O = N-acetyl-beta-D-glucosaminylamine + L-aspartate + H(+). In terms of biological role, cleaves the GlcNAc-Asn bond which joins oligosaccharides to the peptide of asparagine-linked glycoproteins. The protein is Putative N(4)-(beta-N-acetylglucosaminyl)-L-asparaginase GM21137 of Drosophila sechellia (Fruit fly).